A 628-amino-acid polypeptide reads, in one-letter code: Neutral/alkaline invertase 1, mitochondrial (628 aa).

A mitochondrion-targeting transit peptide spans 1–35 (MAAAAISHLRRGAPRHARALLYLSTRRFSSSSAAG). Low complexity predominate over residues 79-90 (ASSAPPLESPPI). The segment at 79 to 113 (ASSAPPLESPPIEELPDDATPPPEEEPGLPAPEKD) is disordered.

It belongs to the glycosyl hydrolase 100 family. As to expression, expressed in roots, leaf and stems.

The protein localises to the mitochondrion. It catalyses the reaction Hydrolysis of terminal non-reducing beta-D-fructofuranoside residues in beta-D-fructofuranosides.. Its function is as follows. Mitochondrial invertase that cleaves sucrose into glucose and fructose. This chain is Neutral/alkaline invertase 1, mitochondrial, found in Oryza sativa subsp. japonica (Rice).